Here is a 430-residue protein sequence, read N- to C-terminus: Histidinol dehydrogenase (430 aa).

The NAD(+) site is built by Tyr130, Gln191, and Asn214. The substrate site is built by Ser237, Gln259, and His262. Zn(2+) is bound by residues Gln259 and His262. Catalysis depends on proton acceptor residues Glu327 and His328. Positions 328, 361, 415, and 420 each coordinate substrate. Asp361 contributes to the Zn(2+) binding site. Residue His420 participates in Zn(2+) binding.

The protein belongs to the histidinol dehydrogenase family. Zn(2+) serves as cofactor.

The catalysed reaction is L-histidinol + 2 NAD(+) + H2O = L-histidine + 2 NADH + 3 H(+). It functions in the pathway amino-acid biosynthesis; L-histidine biosynthesis; L-histidine from 5-phospho-alpha-D-ribose 1-diphosphate: step 9/9. Its function is as follows. Catalyzes the sequential NAD-dependent oxidations of L-histidinol to L-histidinaldehyde and then to L-histidine. The polypeptide is Histidinol dehydrogenase (hisD) (Zymomonas mobilis subsp. mobilis (strain ATCC 31821 / ZM4 / CP4)).